A 195-amino-acid polypeptide reads, in one-letter code: Thymidine kinase (195 aa).

ATP contacts are provided by residues 15 to 22 (GPMYSGKS), E23, 57 to 58 (SH), and 88 to 91 (DEVQ). E89 serves as the catalytic Proton acceptor. F120 contacts substrate. C145 and C148 together coordinate Zn(2+). Residue Y179 coordinates substrate. Residues C183 and C186 each contribute to the Zn(2+) site.

Belongs to the thymidine kinase family.

It is found in the cytoplasm. The enzyme catalyses thymidine + ATP = dTMP + ADP + H(+). The chain is Thymidine kinase from Clostridium acetobutylicum (strain ATCC 824 / DSM 792 / JCM 1419 / IAM 19013 / LMG 5710 / NBRC 13948 / NRRL B-527 / VKM B-1787 / 2291 / W).